Consider the following 241-residue polypeptide: 3-dehydroquinate dehydratase (241 aa).

3-dehydroquinate-binding positions include 35-37 and Arg70; that span reads ELR. His133 (proton donor/acceptor) is an active-site residue. The active-site Schiff-base intermediate with substrate is the Lys160. 2 residues coordinate 3-dehydroquinate: Arg202 and Gln225.

It belongs to the type-I 3-dehydroquinase family. Homodimer.

It catalyses the reaction 3-dehydroquinate = 3-dehydroshikimate + H2O. Its pathway is metabolic intermediate biosynthesis; chorismate biosynthesis; chorismate from D-erythrose 4-phosphate and phosphoenolpyruvate: step 3/7. In terms of biological role, involved in the third step of the chorismate pathway, which leads to the biosynthesis of aromatic amino acids. Catalyzes the cis-dehydration of 3-dehydroquinate (DHQ) and introduces the first double bond of the aromatic ring to yield 3-dehydroshikimate. This chain is 3-dehydroquinate dehydratase, found in Staphylococcus haemolyticus (strain JCSC1435).